The following is a 62-amino-acid chain: Kurtoxin-like I (62 aa).

One can recognise an LCN-type CS-alpha/beta domain in the interval 2-62; that stretch reads IDGYPVDNWN…ARIKRGGRCN (61 aa). 4 cysteine pairs are disulfide-bonded: Cys-12/Cys-61, Cys-16/Cys-37, Cys-23/Cys-44, and Cys-27/Cys-46.

As to expression, expressed by the venom gland.

Its subcellular location is the secreted. In terms of biological role, this neurotoxin acts on sodium and calcium channels. Potently inhibits native voltage-gated T-type calcium channel activity in mouse male germ cells and weakly blocks Cav3.3/CACNA1I channels expressed in Xenopus oocytes. In addition, significantly slows the inactivation of activated recombinant sodium channels (Nav1.5/SCN5A). This Parabuthus granulatus (Granulated thick-tailed scorpion) protein is Kurtoxin-like I.